The chain runs to 238 residues: Ubiquinone biosynthesis O-methyltransferase (238 aa).

S-adenosyl-L-methionine-binding residues include Arg-36, Gly-56, Asp-77, and Met-125.

This sequence belongs to the methyltransferase superfamily. UbiG/COQ3 family.

The catalysed reaction is a 3-demethylubiquinol + S-adenosyl-L-methionine = a ubiquinol + S-adenosyl-L-homocysteine + H(+). It carries out the reaction a 3-(all-trans-polyprenyl)benzene-1,2-diol + S-adenosyl-L-methionine = a 2-methoxy-6-(all-trans-polyprenyl)phenol + S-adenosyl-L-homocysteine + H(+). It participates in cofactor biosynthesis; ubiquinone biosynthesis. Functionally, O-methyltransferase that catalyzes the 2 O-methylation steps in the ubiquinone biosynthetic pathway. The polypeptide is Ubiquinone biosynthesis O-methyltransferase (Histophilus somni (strain 2336) (Haemophilus somnus)).